The chain runs to 251 residues: CDP-diacylglycerol pyrophosphatase (251 aa).

A helical membrane pass occupies residues 4-24 (AGLLFLVMIVIAVVAAGIGYW).

This sequence belongs to the Cdh family.

It localises to the cell inner membrane. It catalyses the reaction a CDP-1,2-diacyl-sn-glycerol + H2O = a 1,2-diacyl-sn-glycero-3-phosphate + CMP + 2 H(+). It functions in the pathway phospholipid metabolism; CDP-diacylglycerol degradation; phosphatidate from CDP-diacylglycerol: step 1/1. This is CDP-diacylglycerol pyrophosphatase from Escherichia coli (strain K12 / MC4100 / BW2952).